A 37-amino-acid chain; its full sequence is Mating pheromone Er-20 (37 aa).

Intrachain disulfides connect Cys3–Cys18, Cys10–Cys32, and Cys15–Cys24.

As to quaternary structure, homodimer.

It localises to the secreted. Its function is as follows. Mating ciliate pheromones (or gamones) are diffusible extracellular communication signals that distinguish different intraspecific classes of cells commonly referred to as 'mating types'. They prepare the latter for conjugation by changing their cell surface properties. The polypeptide is Mating pheromone Er-20 (MAT20) (Euplotes raikovi).